Reading from the N-terminus, the 657-residue chain is Glycogen debranching enzyme (657 aa).

Aspartate 336 functions as the Nucleophile in the catalytic mechanism. Residue glutamate 371 is the Proton donor of the active site. A disordered region spans residues 460–479 (ANGEENRDGTNNNYSNNHGK).

This sequence belongs to the glycosyl hydrolase 13 family.

The enzyme catalyses Hydrolysis of (1-&gt;6)-alpha-D-glucosidic linkages to branches with degrees of polymerization of three or four glucose residues in limit dextrin.. It functions in the pathway glycan degradation; glycogen degradation. In terms of biological role, removes maltotriose and maltotetraose chains that are attached by 1,6-alpha-linkage to the limit dextrin main chain, generating a debranched limit dextrin. The chain is Glycogen debranching enzyme from Escherichia coli O17:K52:H18 (strain UMN026 / ExPEC).